Reading from the N-terminus, the 172-residue chain is Ribosome maturation factor RimM (172 aa).

A PRC barrel domain is found at 96 to 168 (EGEFYYHQII…RVDVELMEGL (73 aa)).

It belongs to the RimM family. As to quaternary structure, binds ribosomal protein uS19.

The protein localises to the cytoplasm. In terms of biological role, an accessory protein needed during the final step in the assembly of 30S ribosomal subunit, possibly for assembly of the head region. Essential for efficient processing of 16S rRNA. May be needed both before and after RbfA during the maturation of 16S rRNA. It has affinity for free ribosomal 30S subunits but not for 70S ribosomes. This is Ribosome maturation factor RimM from Streptococcus pyogenes serotype M3 (strain ATCC BAA-595 / MGAS315).